Here is a 182-residue protein sequence, read N- to C-terminus: Nascent polypeptide-associated complex subunit alpha (182 aa).

One can recognise an NAC-A/B domain in the interval 17–81 (NKNEKKAKEL…AKVDDMNQRI (65 aa)). Residues 120–148 (ASLQGGESNADAAEDDNEEVDETGINPKD) form a disordered region. Over residues 131-141 (AAEDDNEEVDE) the composition is skewed to acidic residues. Residues 144–182 (INPKDIDLIVEQTRVSRGSAVKALKKHDGDMVNALMELS) form the UBA domain.

The protein belongs to the NAC-alpha family. Part of the nascent polypeptide-associated complex (NAC), consisting of EGD2 and EGD1. NAC associates with ribosomes via EGD1.

It is found in the cytoplasm. The protein resides in the nucleus. Component of the nascent polypeptide-associated complex (NAC), a dynamic component of the ribosomal exit tunnel, protecting the emerging polypeptides from interaction with other cytoplasmic proteins to ensure appropriate nascent protein targeting. The NAC complex also promotes mitochondrial protein import by enhancing productive ribosome interactions with the outer mitochondrial membrane and blocks the inappropriate interaction of ribosomes translating non-secretory nascent polypeptides with translocation sites in the membrane of the endoplasmic reticulum. EGD2 may also be involved in transcription regulation. The sequence is that of Nascent polypeptide-associated complex subunit alpha (EGD2) from Lodderomyces elongisporus (strain ATCC 11503 / CBS 2605 / JCM 1781 / NBRC 1676 / NRRL YB-4239) (Yeast).